Consider the following 115-residue polypeptide: uncharacterized protein (115 aa).

The signal sequence occupies residues 1–24 (MLPLCLTFLSFFLSLGGSFKAVMT). Transmembrane regions (helical) follow at residues 39 to 59 (FWIF…ALAI) and 93 to 113 (YLTS…FLLS).

The protein localises to the membrane. This is an uncharacterized protein from Saccharomyces cerevisiae (strain ATCC 204508 / S288c) (Baker's yeast).